Reading from the N-terminus, the 472-residue chain is Methanethiol oxidase (472 aa).

It belongs to the selenium-binding protein family.

It is found in the nucleus. Its subcellular location is the cytoplasm. It localises to the cytosol. The protein resides in the membrane. It carries out the reaction methanethiol + O2 + H2O = hydrogen sulfide + formaldehyde + H2O2 + H(+). It participates in organosulfur degradation. Its function is as follows. Catalyzes the oxidation of methanethiol, an organosulfur compound known to be produced in substantial amounts by gut bacteria. Selenium-binding protein which may be involved in the sensing of reactive xenobiotics in the cytoplasm. May be involved in intra-Golgi protein transport. The sequence is that of Methanethiol oxidase (selenbp1-a) from Xenopus laevis (African clawed frog).